The chain runs to 156 residues: Transcription antitermination protein NusB (156 aa).

Belongs to the NusB family.

Involved in transcription antitermination. Required for transcription of ribosomal RNA (rRNA) genes. Binds specifically to the boxA antiterminator sequence of the ribosomal RNA (rrn) operons. In Rickettsia conorii (strain ATCC VR-613 / Malish 7), this protein is Transcription antitermination protein NusB.